A 306-amino-acid polypeptide reads, in one-letter code: 2-dehydro-3-deoxy-D-gluconate/2-dehydro-3-deoxy-phosphogluconate aldolase (306 aa).

Substrate is bound by residues 61–62 (TT), 148–150 (YNY), and 173–175 (KDT). The active-site Schiff-base intermediate with substrate is Lys173.

It belongs to the DapA family. KDPG aldolase subfamily. Homotetramer; dimer of dimers.

The enzyme catalyses 2-dehydro-3-deoxy-6-phospho-D-gluconate = D-glyceraldehyde 3-phosphate + pyruvate. The catalysed reaction is 2-dehydro-3-deoxy-D-gluconate = D-glyceraldehyde + pyruvate. The protein operates within carbohydrate acid metabolism; 2-dehydro-3-deoxy-D-gluconate degradation; D-glyceraldehyde 3-phosphate and pyruvate from 2-dehydro-3-deoxy-D-gluconate: step 2/2. In terms of biological role, involved in the degradation of glucose via the Entner-Doudoroff pathway. Catalyzes the reversible cleavage of 2-keto-3-deoxy-6-phosphogluconate (KDPG) and 2-keto-3-deoxygluconate (KDG) forming pyruvate and glyceraldehyde 3-phosphate or glyceraldehyde, respectively. It is not able to use 2-keto-3-deoxy-6-phosphogalactonate (KDPGal) and 2-keto-3-deoxygalactonate (KDGal) as substrate. This chain is 2-dehydro-3-deoxy-D-gluconate/2-dehydro-3-deoxy-phosphogluconate aldolase (kdgA), found in Thermoproteus tenax.